The chain runs to 251 residues: Regulator of G-protein signaling 9-binding protein B (251 aa).

The Cytoplasmic portion of the chain corresponds to 1 to 230 (MPLQNVKVAD…NSKGCCSDGQ (230 aa)). Coiled coils occupy residues 52-94 (HLRD…ELER) and 158-187 (ANKASLEYQEIEEEILKVDNMITDMEMKVN). The helical; Anchor for type IV membrane protein transmembrane segment at 231–250 (LIVFLLLCGTALVAITLYSI) threads the bilayer. A topological domain (extracellular) is located at residue L251.

Belongs to the RGS7BP/RGS9BP family.

The protein localises to the membrane. Regulator of G protein-coupled receptor (GPCR) signaling. Probably acts by regulating the activity of some 'R7' family protein (RGS6, RGS7, RGS9 and/or RGS11). In Xenopus laevis (African clawed frog), this protein is Regulator of G-protein signaling 9-binding protein B (rgs9bp-b).